We begin with the raw amino-acid sequence, 250 residues long: 5'-nucleotidase SurE (250 aa).

The a divalent metal cation site is built by Asp8, Asp9, Ser39, and Asn92.

Belongs to the SurE nucleotidase family. A divalent metal cation is required as a cofactor.

The protein localises to the cytoplasm. It catalyses the reaction a ribonucleoside 5'-phosphate + H2O = a ribonucleoside + phosphate. In terms of biological role, nucleotidase that shows phosphatase activity on nucleoside 5'-monophosphates. The sequence is that of 5'-nucleotidase SurE from Vibrio cholerae serotype O1 (strain ATCC 39315 / El Tor Inaba N16961).